The sequence spans 281 residues: MEMO1 family protein Pars_0062 (281 aa).

Belongs to the MEMO1 family.

The polypeptide is MEMO1 family protein Pars_0062 (Pyrobaculum arsenaticum (strain DSM 13514 / JCM 11321 / PZ6)).